A 622-amino-acid chain; its full sequence is Elongation factor 4 (622 aa).

The tr-type G domain maps to 17 to 198 (ELLRNFCIIA…QIVRQIPAPV (182 aa)). Residues 29 to 34 (DHGKST) and 145 to 148 (NKID) contribute to the GTP site.

Belongs to the TRAFAC class translation factor GTPase superfamily. Classic translation factor GTPase family. LepA subfamily.

The protein localises to the cell membrane. It catalyses the reaction GTP + H2O = GDP + phosphate + H(+). Its function is as follows. Required for accurate and efficient protein synthesis under certain stress conditions. May act as a fidelity factor of the translation reaction, by catalyzing a one-codon backward translocation of tRNAs on improperly translocated ribosomes. Back-translocation proceeds from a post-translocation (POST) complex to a pre-translocation (PRE) complex, thus giving elongation factor G a second chance to translocate the tRNAs correctly. Binds to ribosomes in a GTP-dependent manner. This is Elongation factor 4 from Kineococcus radiotolerans (strain ATCC BAA-149 / DSM 14245 / SRS30216).